Here is a 353-residue protein sequence, read N- to C-terminus: Photosystem II D2 protein (353 aa).

Thr2 carries the post-translational modification N-acetylthreonine. Phosphothreonine is present on Thr2. The chain crosses the membrane as a helical span at residues 41–61; sequence CAYFALGGWFTGTTFVTSWYT. Chlorophyll a is bound at residue His118. A helical transmembrane segment spans residues 125 to 141; sequence GFMLRQFELARSVQLRP. Residues Gln130 and Asn143 each coordinate pheophytin a. The helical transmembrane segment at 153 to 166 threads the bilayer; that stretch reads VFVSVFLIYPLGQS. His198 is a binding site for chlorophyll a. The chain crosses the membrane as a helical span at residues 208–228; it reads AALLCAIHGATVENTLFEDGD. The a plastoquinone site is built by His215 and Phe262. His215 is a Fe cation binding site. His269 contributes to the Fe cation binding site. Residues 279 to 295 traverse the membrane as a helical segment; the sequence is GLWMSAIGVVGLALNLR.

The protein belongs to the reaction center PufL/M/PsbA/D family. In terms of assembly, PSII is composed of 1 copy each of membrane proteins PsbA, PsbB, PsbC, PsbD, PsbE, PsbF, PsbH, PsbI, PsbJ, PsbK, PsbL, PsbM, PsbT, PsbX, PsbY, PsbZ, Psb30/Ycf12, at least 3 peripheral proteins of the oxygen-evolving complex and a large number of cofactors. It forms dimeric complexes. The D1/D2 heterodimer binds P680, chlorophylls that are the primary electron donor of PSII, and subsequent electron acceptors. It shares a non-heme iron and each subunit binds pheophytin, quinone, additional chlorophylls, carotenoids and lipids. There is also a Cl(-1) ion associated with D1 and D2, which is required for oxygen evolution. The PSII complex binds additional chlorophylls, carotenoids and specific lipids. is required as a cofactor.

The protein localises to the plastid. Its subcellular location is the chloroplast thylakoid membrane. The enzyme catalyses 2 a plastoquinone + 4 hnu + 2 H2O = 2 a plastoquinol + O2. Photosystem II (PSII) is a light-driven water:plastoquinone oxidoreductase that uses light energy to abstract electrons from H(2)O, generating O(2) and a proton gradient subsequently used for ATP formation. It consists of a core antenna complex that captures photons, and an electron transfer chain that converts photonic excitation into a charge separation. The D1/D2 (PsbA/PsbD) reaction center heterodimer binds P680, the primary electron donor of PSII as well as several subsequent electron acceptors. D2 is needed for assembly of a stable PSII complex. The polypeptide is Photosystem II D2 protein (Agrostis stolonifera (Creeping bentgrass)).